A 457-amino-acid polypeptide reads, in one-letter code: tRNA modification GTPase MnmE (457 aa).

Positions 25, 87, and 126 each coordinate (6S)-5-formyl-5,6,7,8-tetrahydrofolate. The 155-residue stretch at 223–377 (GISTAIIGRP…IEERINQLFF (155 aa)) folds into the TrmE-type G domain. Asn233 lines the K(+) pocket. GTP contacts are provided by residues 233–238 (NVGKSS), 252–258 (TDIAGTT), and 277–280 (DTAG). Ser237 provides a ligand contact to Mg(2+). Thr252, Ile254, and Thr257 together coordinate K(+). Thr258 serves as a coordination point for Mg(2+). Lys457 is a (6S)-5-formyl-5,6,7,8-tetrahydrofolate binding site.

Belongs to the TRAFAC class TrmE-Era-EngA-EngB-Septin-like GTPase superfamily. TrmE GTPase family. In terms of assembly, homodimer. Heterotetramer of two MnmE and two MnmG subunits. K(+) is required as a cofactor.

The protein resides in the cytoplasm. Functionally, exhibits a very high intrinsic GTPase hydrolysis rate. Involved in the addition of a carboxymethylaminomethyl (cmnm) group at the wobble position (U34) of certain tRNAs, forming tRNA-cmnm(5)s(2)U34. This is tRNA modification GTPase MnmE from Streptococcus gordonii (strain Challis / ATCC 35105 / BCRC 15272 / CH1 / DL1 / V288).